The following is an 807-amino-acid chain: Tyrosine-protein phosphatase non-receptor type 22 (807 aa).

The Tyrosine-protein phosphatase domain occupies 24-289 (FANEFLKLKR…ELVYNAVLEL (266 aa)). At Ser-35 the chain carries Phosphoserine; by PKC/PRKCD. Cys-129 and Cys-227 are disulfide-bonded. The active-site Phosphocysteine intermediate is the Cys-227. Substrate-binding positions include 227–233 (CSAGCGR) and Gln-274. Residues Ser-449, Ser-635, Ser-684, and Ser-692 each carry the phosphoserine modification. Disordered stretches follow at residues 676 to 700 (SVKLRSPKSELHQDRSSPPPPLPER) and 724 to 746 (SYPDTMENSTSSKQTLKTPGKSF).

It belongs to the protein-tyrosine phosphatase family. Non-receptor class 4 subfamily. As to quaternary structure, interacts with CSK. Interacts with LPXN. Interacts with CBL. Interacts with TRAF3 (via MATH domain); the interaction promotes TRAF3 polyubiquitination. Post-translationally, phosphorylation on Ser-35 by PKC/PRKCD abrogates its ability to dephosphorylate and inactivate the SRC family kinases. In terms of tissue distribution, expressed in bone marrow, B and T-cells, PBMCs, natural killer cells, monocytes, dendritic cells and neutrophils. Both isoform 1 and 4 are predominantly expressed in lymphoid tissues and cells. Isoform 1 is expressed in thymocytes and both mature B and T-cells.

Its subcellular location is the cytoplasm. It carries out the reaction O-phospho-L-tyrosyl-[protein] + H2O = L-tyrosyl-[protein] + phosphate. The enzyme catalyses N-(5Z,8Z,11Z,14Z-eicosatetraenoyl)-ethanolamine phosphate + H2O = N-(5Z,8Z,11Z,14Z-eicosatetraenoyl)-ethanolamine + phosphate. Its activity is regulated as follows. Down-regulated by phosphorylation. Acts as a negative regulator of T-cell receptor (TCR) signaling by direct dephosphorylation of the Src family kinases LCK and FYN, ITAMs of the TCRz/CD3 complex, as well as ZAP70, VAV, VCP and other key signaling molecules. Associates with and probably dephosphorylates CBL. Dephosphorylates LCK at its activating 'Tyr-394' residue. Dephosphorylates ZAP70 at its activating 'Tyr-493' residue. Dephosphorylates the immune system activator SKAP2. Positively regulates toll-like receptor (TLR)-induced type 1 interferon production. Promotes host antiviral responses mediated by type 1 interferon. Regulates NOD2-induced pro-inflammatory cytokine secretion and autophagy. Acts as an activator of NLRP3 inflammasome assembly by mediating dephosphorylation of 'Tyr-861' of NLRP3. Dephosphorylates phospho-anandamide (p-AEA), an endocannabinoid to anandamide (also called N-arachidonoylethanolamide). The polypeptide is Tyrosine-protein phosphatase non-receptor type 22 (PTPN22) (Homo sapiens (Human)).